Reading from the N-terminus, the 20-residue chain is Malate dehydrogenase (20 aa).

Residue 11–17 (GAAGQIG) participates in NAD(+) binding.

Belongs to the LDH/MDH superfamily. MDH type 2 family.

It carries out the reaction (S)-malate + NAD(+) = oxaloacetate + NADH + H(+). Functionally, catalyzes the reversible oxidation of malate to oxaloacetate. This chain is Malate dehydrogenase (mdh), found in Kibdelosporangium aridum.